Here is a 554-residue protein sequence, read N- to C-terminus: Phosphomethylpyrimidine synthase (554 aa).

Substrate contacts are provided by residues Asn191, Met220, Tyr249, His285, 305–307 (SRG), 346–349 (DGLR), and Glu385. Position 389 (His389) interacts with Zn(2+). Tyr412 contacts substrate. Residue His453 participates in Zn(2+) binding. Residues Cys533, Cys536, and Cys541 each contribute to the [4Fe-4S] cluster site.

Belongs to the ThiC family. As to quaternary structure, homodimer. The cofactor is [4Fe-4S] cluster.

The catalysed reaction is 5-amino-1-(5-phospho-beta-D-ribosyl)imidazole + S-adenosyl-L-methionine = 4-amino-2-methyl-5-(phosphooxymethyl)pyrimidine + CO + 5'-deoxyadenosine + formate + L-methionine + 3 H(+). It functions in the pathway cofactor biosynthesis; thiamine diphosphate biosynthesis. Functionally, catalyzes the synthesis of the hydroxymethylpyrimidine phosphate (HMP-P) moiety of thiamine from aminoimidazole ribotide (AIR) in a radical S-adenosyl-L-methionine (SAM)-dependent reaction. This Ehrlichia chaffeensis (strain ATCC CRL-10679 / Arkansas) protein is Phosphomethylpyrimidine synthase.